The chain runs to 372 residues: tRNA 2-selenouridine synthase (372 aa).

The Rhodanese domain occupies 17 to 140; it reads FLQDIPLIDV…LRNFLLTTLE (124 aa). Cys-100 acts as the S-selanylcysteine intermediate in catalysis.

It belongs to the SelU family. In terms of assembly, monomer.

The catalysed reaction is 5-methylaminomethyl-2-thiouridine(34) in tRNA + selenophosphate + (2E)-geranyl diphosphate + H2O + H(+) = 5-methylaminomethyl-2-selenouridine(34) in tRNA + (2E)-thiogeraniol + phosphate + diphosphate. The enzyme catalyses 5-methylaminomethyl-2-thiouridine(34) in tRNA + (2E)-geranyl diphosphate = 5-methylaminomethyl-S-(2E)-geranyl-thiouridine(34) in tRNA + diphosphate. It catalyses the reaction 5-methylaminomethyl-S-(2E)-geranyl-thiouridine(34) in tRNA + selenophosphate + H(+) = 5-methylaminomethyl-2-(Se-phospho)selenouridine(34) in tRNA + (2E)-thiogeraniol. It carries out the reaction 5-methylaminomethyl-2-(Se-phospho)selenouridine(34) in tRNA + H2O = 5-methylaminomethyl-2-selenouridine(34) in tRNA + phosphate. Involved in the post-transcriptional modification of the uridine at the wobble position (U34) of tRNA(Lys), tRNA(Glu) and tRNA(Gln). Catalyzes the conversion of 2-thiouridine (S2U-RNA) to 2-selenouridine (Se2U-RNA). Acts in a two-step process involving geranylation of 2-thiouridine (S2U) to S-geranyl-2-thiouridine (geS2U) and subsequent selenation of the latter derivative to 2-selenouridine (Se2U) in the tRNA chain. In Serratia proteamaculans (strain 568), this protein is tRNA 2-selenouridine synthase.